A 632-amino-acid chain; its full sequence is Probable potassium transport system protein Kup (632 aa).

12 consecutive transmembrane segments (helical) span residues 19–39 (LVVG…LYSL), 59–79 (IISM…VMFV), 110–130 (LIMM…VITP), 146–166 (PGLS…LFFI), 178–198 (FGPI…IHLV), 221–241 (LQAF…EALY), 256–276 (WFVL…AMLL), 298–318 (MVLL…SGAF), 346–366 (IYMP…VLAF), 375–395 (AYGI…ALVM), 403–423 (PALV…FFAA), and 428–448 (IAEG…LLMT).

The protein belongs to the HAK/KUP transporter (TC 2.A.72) family.

It is found in the cell inner membrane. It catalyses the reaction K(+)(in) + H(+)(in) = K(+)(out) + H(+)(out). Functionally, transport of potassium into the cell. Likely operates as a K(+):H(+) symporter. This is Probable potassium transport system protein Kup from Cupriavidus metallidurans (strain ATCC 43123 / DSM 2839 / NBRC 102507 / CH34) (Ralstonia metallidurans).